The chain runs to 350 residues: Methionine import ATP-binding protein MetN (350 aa).

Residues 2–242 (IELKGISQHF…PRHDVTRALI (241 aa)) enclose the ABC transporter domain. Residue 39–46 (GRSGAGKS) participates in ATP binding.

This sequence belongs to the ABC transporter superfamily. Methionine importer (TC 3.A.1.24) family. The complex is composed of two ATP-binding proteins (MetN), two transmembrane proteins (MetI) and a solute-binding protein (MetQ).

It is found in the cell inner membrane. The enzyme catalyses L-methionine(out) + ATP + H2O = L-methionine(in) + ADP + phosphate + H(+). It catalyses the reaction D-methionine(out) + ATP + H2O = D-methionine(in) + ADP + phosphate + H(+). Its function is as follows. Part of the ABC transporter complex MetNIQ involved in methionine import. Responsible for energy coupling to the transport system. The polypeptide is Methionine import ATP-binding protein MetN (Ralstonia nicotianae (strain ATCC BAA-1114 / GMI1000) (Ralstonia solanacearum)).